A 185-amino-acid chain; its full sequence is Ribosome-recycling factor (185 aa).

The protein belongs to the RRF family.

It localises to the cytoplasm. Responsible for the release of ribosomes from messenger RNA at the termination of protein biosynthesis. May increase the efficiency of translation by recycling ribosomes from one round of translation to another. This chain is Ribosome-recycling factor, found in Bacillus cereus (strain ATCC 10987 / NRS 248).